The chain runs to 157 residues: Ribosomal RNA large subunit methyltransferase H (157 aa).

S-adenosyl-L-methionine is bound by residues Gly-106 and 125 to 130 (LSEMTF).

This sequence belongs to the RNA methyltransferase RlmH family. Homodimer.

Its subcellular location is the cytoplasm. The catalysed reaction is pseudouridine(1915) in 23S rRNA + S-adenosyl-L-methionine = N(3)-methylpseudouridine(1915) in 23S rRNA + S-adenosyl-L-homocysteine + H(+). Functionally, specifically methylates the pseudouridine at position 1915 (m3Psi1915) in 23S rRNA. This Syntrophobacter fumaroxidans (strain DSM 10017 / MPOB) protein is Ribosomal RNA large subunit methyltransferase H.